Consider the following 359-residue polypeptide: Ornithine carbamoyltransferase, mitochondrial (359 aa).

The N-terminal 24 residues, 1-24 (MASLRSVLKSQSLRHTVRSYSSQT), are a transit peptide targeting the mitochondrion. Residues 87 to 90 (STRT), R138, H165, and Q168 contribute to the carbamoyl phosphate site. Positions 205, 271, 275, and 276 each coordinate L-ornithine. The active-site Proton acceptor is the C313. Carbamoyl phosphate is bound by residues 313–314 (CL) and R340.

This sequence belongs to the aspartate/ornithine carbamoyltransferase superfamily. OTCase family. As to quaternary structure, homotrimer.

It localises to the mitochondrion matrix. It catalyses the reaction carbamoyl phosphate + L-ornithine = L-citrulline + phosphate + H(+). It participates in amino-acid biosynthesis; L-arginine biosynthesis; L-arginine from L-ornithine and carbamoyl phosphate: step 1/3. This Emericella nidulans (strain FGSC A4 / ATCC 38163 / CBS 112.46 / NRRL 194 / M139) (Aspergillus nidulans) protein is Ornithine carbamoyltransferase, mitochondrial (argB).